Here is a 123-residue protein sequence, read N- to C-terminus: MINQANKTAKLRVKRAVRVRKHLRGTGLKPRLCVVKSNSHIQAQLIDDETGTTLGGTATFAKEYRNTEFCKKNKASARKLGEQIAEIAKSKNIKEVVFDRGPFKYHGILAELANAARAGGLQF.

This sequence belongs to the universal ribosomal protein uL18 family. In terms of assembly, part of the 50S ribosomal subunit; part of the 5S rRNA/L5/L18/L25 subcomplex. Contacts the 5S and 23S rRNAs.

Its function is as follows. This is one of the proteins that bind and probably mediate the attachment of the 5S RNA into the large ribosomal subunit, where it forms part of the central protuberance. This chain is Large ribosomal subunit protein uL18, found in Protochlamydia amoebophila (strain UWE25).